Reading from the N-terminus, the 136-residue chain is Sec-independent protein translocase protein TatB (136 aa).

Residues 1 to 21 (MFDIGFPELALVAVIGLLVLG) traverse the membrane as a helical segment. Residues 89–136 (YEDMVEKNPATPMSSKASTPQTPSSGPDPQPVESHSHSDDASKQHDRS) are disordered. A compositionally biased stretch (polar residues) spans 99 to 115 (TPMSSKASTPQTPSSGP). Residues 122 to 136 (SHSHSDDASKQHDRS) show a composition bias toward basic and acidic residues.

The protein belongs to the TatB family. As to quaternary structure, the Tat system comprises two distinct complexes: a TatABC complex, containing multiple copies of TatA, TatB and TatC subunits, and a separate TatA complex, containing only TatA subunits. Substrates initially bind to the TatABC complex, which probably triggers association of the separate TatA complex to form the active translocon.

The protein localises to the cell inner membrane. Functionally, part of the twin-arginine translocation (Tat) system that transports large folded proteins containing a characteristic twin-arginine motif in their signal peptide across membranes. Together with TatC, TatB is part of a receptor directly interacting with Tat signal peptides. TatB may form an oligomeric binding site that transiently accommodates folded Tat precursor proteins before their translocation. The protein is Sec-independent protein translocase protein TatB of Hahella chejuensis (strain KCTC 2396).